Here is a 54-residue protein sequence, read N- to C-terminus: Large ribosomal subunit protein bL32 (54 aa).

Residues 1–24 form a disordered region; the sequence is MAVQKSKPTRSKRGMRRSHDSLKE. A compositionally biased stretch (basic residues) spans 7–16; that stretch reads KPTRSKRGMR.

Belongs to the bacterial ribosomal protein bL32 family.

This is Large ribosomal subunit protein bL32 from Buchnera aphidicola subsp. Schizaphis graminum (strain Sg).